A 212-amino-acid chain; its full sequence is MSLFDKKHLVSPADALPGRNTPMPVATLHAVNGHSMTNVPDGMEIAIFAMGCFWGVERLFWQLPGVYSTAAGYTGGYTPNPTYREVCSGDTGHAEAVRIVYDPSVISYEQLLQVFWENHDPAQGMRQGNDHGTQYRSAIYPLTPEQDAAARASLERFQAAMLAADDDRHITTEIANATPFYYAEDDHQQYLHKNPYGYCGIGGIGVCLPPEA.

Residue C52 is part of the active site.

The protein belongs to the MsrA Met sulfoxide reductase family.

The catalysed reaction is L-methionyl-[protein] + [thioredoxin]-disulfide + H2O = L-methionyl-(S)-S-oxide-[protein] + [thioredoxin]-dithiol. It catalyses the reaction [thioredoxin]-disulfide + L-methionine + H2O = L-methionine (S)-S-oxide + [thioredoxin]-dithiol. Has an important function as a repair enzyme for proteins that have been inactivated by oxidation. Catalyzes the reversible oxidation-reduction of methionine sulfoxide in proteins to methionine. The chain is Peptide methionine sulfoxide reductase MsrA from Escherichia coli (strain ATCC 8739 / DSM 1576 / NBRC 3972 / NCIMB 8545 / WDCM 00012 / Crooks).